Consider the following 430-residue polypeptide: Gustatory receptor-like 43a (430 aa).

Residues 1-31 lie on the Cytoplasmic side of the membrane; that stretch reads MSTGSHSPEAMWSATNFRRHQRKPNQVLHRW. A helical transmembrane segment spans residues 32–52; sequence FFKGSAWIIYAIACGLHFFKL. Residues 53–79 lie on the Extracellular side of the membrane; sequence HYNERTNQVEESQYHRIWSKIVVVLKV. A helical membrane pass occupies residues 80–100; it reads ILLASPYLQYFVLGLGIYIHI. Over 101–110 the chain is Cytoplasmic; that stretch reads TLVQDSKAQN. The chain crosses the membrane as a helical span at residues 111–131; it reads FLMSLIVLGIVIGVLRRLLIF. At 132 to 168 the chain is on the extracellular side; it reads LHLKRDRRFLKHTVNEILHITSALEQKFGMEYKCDST. Residues 169–189 form a helical membrane-spanning segment; sequence LLVVYLAKLWILTVMLDSLWY. The Cytoplasmic portion of the chain corresponds to 190-277; it reads KPYFLSSIFL…RDNVSWLSTS (88 aa). A helical transmembrane segment spans residues 278–298; sequence VYLMIFTCIFNAELLIECSLF. Over 299-306 the chain is Extracellular; it reads AGDELENK. The helical transmembrane segment at 307-327 threads the bilayer; it reads IYIITDGCLGPVCVPILYVLI. The Cytoplasmic segment spans residues 328 to 396; the sequence is LGMCTDRFRD…IILDITCDRE (69 aa). The helical transmembrane segment at 397–417 threads the bilayer; sequence FVMDYIVTVILTALSLVQYTI. Topologically, residues 418 to 430 are extracellular; it reads STGGNISECVTHK. A glycan (N-linked (GlcNAc...) asparagine) is linked at asparagine 422.

It is found in the cell membrane. The protein is Gustatory receptor-like 43a of Drosophila melanogaster (Fruit fly).